A 350-amino-acid chain; its full sequence is LysM domain-containing GPI-anchored protein 2 (350 aa).

The first 23 residues, 1–23 (METSCFTLLGLLVSLSFFLTLSA), serve as a signal peptide directing secretion. 4 N-linked (GlcNAc...) asparagine glycosylation sites follow: Asn30, Asn48, Asn76, and Asn99. 4 cysteine pairs are disulfide-bonded: Cys31-Cys97, Cys38-Cys161, Cys95-Cys159, and Cys97-Cys161. 2 consecutive LysM domains span residues 108–155 (IEYT…KFWI) and 172–216 (YAHV…PLDV). Chitin is bound by residues 114–120 (KDDILSF) and 142–149 (PDPNKIEI). Asn193, Asn238, Asn258, Asn289, and Asn305 each carry an N-linked (GlcNAc...) asparagine glycan. 2 cysteine pairs are disulfide-bonded: Cys221–Cys253 and Cys248–Cys277. Asp318 carries the GPI-anchor amidated aspartate lipid modification. A propeptide spans 319-350 (SAGPDNYASTLSSSFNFVIVLIQCALLCLCLL) (removed in mature form).

In terms of assembly, forms homooligomers. Interacts with CERK1. Binds to chitin oligosaccharide elicitor.

The protein localises to the cell membrane. Its function is as follows. Chitin elicitor-binding protein involved in the perception of chitin oligosaccharide elicitor. The sequence is that of LysM domain-containing GPI-anchored protein 2 (LYM2) from Arabidopsis thaliana (Mouse-ear cress).